A 593-amino-acid polypeptide reads, in one-letter code: Auxin response factor 12 (593 aa).

Residues 126–228 (FTKVLTASDT…ELRVGIRRAR (103 aa)) constitute a DNA-binding region (TF-B3). The 82-residue stretch at 511-592 (RTCTKVQMQG…MVKKIFIQKR (82 aa)) folds into the PB1 domain.

The protein belongs to the ARF family. As to quaternary structure, homodimers and heterodimers.

It localises to the nucleus. Auxin response factors (ARFs) are transcriptional factors that bind specifically to the DNA sequence 5'-TGTCTC-3' found in the auxin-responsive promoter elements (AuxREs). Could act as transcriptional activator or repressor. Formation of heterodimers with Aux/IAA proteins may alter their ability to modulate early auxin response genes expression. In Arabidopsis thaliana (Mouse-ear cress), this protein is Auxin response factor 12 (ARF12).